Here is a 221-residue protein sequence, read N- to C-terminus: Large ribosomal subunit protein bL25 (221 aa).

Positions Ser-174 to Glu-221 are disordered. Residues Glu-184–Glu-221 show a composition bias toward acidic residues.

This sequence belongs to the bacterial ribosomal protein bL25 family. CTC subfamily. Part of the 50S ribosomal subunit; part of the 5S rRNA/L5/L18/L25 subcomplex. Contacts the 5S rRNA. Binds to the 5S rRNA independently of L5 and L18.

This is one of the proteins that binds to the 5S RNA in the ribosome where it forms part of the central protuberance. The chain is Large ribosomal subunit protein bL25 from Staphylococcus haemolyticus (strain JCSC1435).